A 1483-amino-acid chain; its full sequence is Heme-responsive zinc finger transcription factor HAP1 (1483 aa).

The segment covering 1 to 50 (MSNTPYNSSVPSIASMTQSSVSRSPNMHTATTPGANTSSNSPPLHMSSDS) has biased composition (polar residues). The interval 1–56 (MSNTPYNSSVPSIASMTQSSVSRSPNMHTATTPGANTSSNSPPLHMSSDSSKIKRK) is disordered. Residues C64, C67, C74, C81, C84, and C93 each coordinate Zn(2+). A DNA-binding region (zn(2)-C6 fungal-type) is located at residues 64–93 (CTICRKRKVKCDKLRPHCQQCTKTGVAHLC). Residues 105–134 (EKELLKDNELKKLRERVKSLEKTLSKVHSS) adopt a coiled-coil conformation. The interval 126–208 (KTLSKVHSSP…ANSSSLSISN (83 aa)) is disordered. Low complexity predominate over residues 130–142 (KVHSSPSSNSLKS). Polar residues-rich tracts occupy residues 143–152 (YNTPESSNLF) and 160–176 (TLVN…SHMH). The span at 177–208 (QQQQQQQQQEQQQDFSRSANANANSSSLSISN) shows a compositional bias: low complexity. Positions 244–444 (KGDPYLKLLW…NTIPHHQPQS (201 aa)) are heme-responsive; required for HMC formation. 6 HRM repeats span residues 280 to 285 (KCPINH), 299 to 304 (KCPVDH), 323 to 328 (KCPVDH), 347 to 352 (RCPVDH), 389 to 394 (KCPVDH), and 415 to 420 (RCPIDH). Composition is skewed to polar residues over residues 432–447 (STHN…SGSH) and 706–734 (QLNA…NPTL). Disordered stretches follow at residues 432 to 458 (STHN…SRKH) and 706 to 767 (QLNA…KENQ). The segment covering 735 to 759 (NNNMSAATTNSSSRSGSADSRSGSN) has biased composition (low complexity). Residues 1192-1197 (KCPVYQ) form an HRM 7 repeat. The interval 1384-1411 (TANTDTSANGSALSTLTSPQGSDLASNS) is disordered. Polar residues predominate over residues 1388 to 1411 (DTSANGSALSTLTSPQGSDLASNS).

In terms of assembly, binds DNA as a homodimer. Interacts with SRO9 and YDJ1. In the absence of heme, binds to at least four cellular proteins, including YDJ1 and SRO9, forming a high-molecular-weight complex (HMC) which results in repression of its activity and dictates its DNA-binding specificity.

It is found in the nucleus. Functionally, regulation of oxygen dependent gene expression. It modulates the expression of Iso-1 (CYP1) and Iso-2 (CYP3) cytochrome c. In response to heme, promotes transcription of genes encoding functions required for respiration, controlling oxidative damage and repression of anaerobic genes. Binds to the sequence 5'-CGGNNNTNNCGG-3'. Is non-functional in terms of iso-1 cytochrome c expression in strain S288c and its derivatives. This is Heme-responsive zinc finger transcription factor HAP1 (HAP1) from Saccharomyces cerevisiae (Baker's yeast).